The chain runs to 585 residues: Pyruvate kinase (585 aa).

Position 32 (R32) interacts with substrate. N34, S36, D66, and T67 together coordinate K(+). 34-37 (NFSH) serves as a coordination point for ATP. 2 residues coordinate ATP: R73 and K156. E221 is a binding site for Mg(2+). Substrate-binding residues include G244, D245, and T277. D245 contributes to the Mg(2+) binding site.

Belongs to the pyruvate kinase family. The protein in the C-terminal section; belongs to the PEP-utilizing enzyme family. The cofactor is Mg(2+). It depends on K(+) as a cofactor.

It carries out the reaction pyruvate + ATP = phosphoenolpyruvate + ADP + H(+). Its pathway is carbohydrate degradation; glycolysis; pyruvate from D-glyceraldehyde 3-phosphate: step 5/5. This is Pyruvate kinase (pyk) from Staphylococcus aureus (strain bovine RF122 / ET3-1).